The primary structure comprises 418 residues: Replication factor C large subunit (418 aa).

ATP is bound at residue 47 to 54 (GSQGTGKT).

This sequence belongs to the activator 1 small subunits family. RfcL subfamily. In terms of assembly, heteromultimer composed of small subunits (RfcS) and large subunits (RfcL).

Functionally, part of the RFC clamp loader complex which loads the PCNA sliding clamp onto DNA. This chain is Replication factor C large subunit, found in Thermoplasma acidophilum (strain ATCC 25905 / DSM 1728 / JCM 9062 / NBRC 15155 / AMRC-C165).